Reading from the N-terminus, the 525-residue chain is Protein nucleotidyltransferase YdiU (525 aa).

8 residues coordinate ATP: glycine 107, glycine 109, arginine 110, lysine 129, aspartate 141, glycine 142, arginine 192, and arginine 199. Aspartate 268 serves as the catalytic Proton acceptor. Mg(2+) contacts are provided by asparagine 269 and aspartate 278. Residue aspartate 278 coordinates ATP.

The protein belongs to the SELO family. Mg(2+) is required as a cofactor. The cofactor is Mn(2+).

The catalysed reaction is L-seryl-[protein] + ATP = 3-O-(5'-adenylyl)-L-seryl-[protein] + diphosphate. It catalyses the reaction L-threonyl-[protein] + ATP = 3-O-(5'-adenylyl)-L-threonyl-[protein] + diphosphate. It carries out the reaction L-tyrosyl-[protein] + ATP = O-(5'-adenylyl)-L-tyrosyl-[protein] + diphosphate. The enzyme catalyses L-histidyl-[protein] + UTP = N(tele)-(5'-uridylyl)-L-histidyl-[protein] + diphosphate. The catalysed reaction is L-seryl-[protein] + UTP = O-(5'-uridylyl)-L-seryl-[protein] + diphosphate. It catalyses the reaction L-tyrosyl-[protein] + UTP = O-(5'-uridylyl)-L-tyrosyl-[protein] + diphosphate. Nucleotidyltransferase involved in the post-translational modification of proteins. It can catalyze the addition of adenosine monophosphate (AMP) or uridine monophosphate (UMP) to a protein, resulting in modifications known as AMPylation and UMPylation. This is Protein nucleotidyltransferase YdiU from Ralstonia nicotianae (strain ATCC BAA-1114 / GMI1000) (Ralstonia solanacearum).